The chain runs to 371 residues: Antibiotic efflux pump periplasmic linker protein ArpA (371 aa).

An N-terminal signal peptide occupies residues 1–22 (MQFKPAVTALVSAVALATLLSG). The N-palmitoyl cysteine moiety is linked to residue Cys-23. Residue Cys-23 is the site of S-diacylglycerol cysteine attachment. Positions 115 to 155 (LAERYKQLIDEQAVSKQEYDDANAKRLQAEASLKSAQIDLR) form a coiled coil.

This sequence belongs to the membrane fusion protein (MFP) (TC 8.A.1) family.

The protein resides in the cell inner membrane. The periplasmic linker protein component of an antibiotic efflux pump. Confers resistance to numerous structurally unrelated antibiotics such as carbenicillin, chloramphenicol, erythromycin, novobiocin, streptomycin and tetracycline. Is not involved in organic solvent efflux. The chain is Antibiotic efflux pump periplasmic linker protein ArpA (arpA) from Pseudomonas putida (Arthrobacter siderocapsulatus).